Here is a 495-residue protein sequence, read N- to C-terminus: Trimethylamine methyltransferase MttB2 (495 aa).

Residue Pyl334 is a non-standard amino acid, pyrrolysine.

Belongs to the trimethylamine methyltransferase family. In terms of assembly, can form a complex with MttC.

The catalysed reaction is Co(I)-[trimethylamine-specific corrinoid protein] + trimethylamine + H(+) = methyl-Co(III)-[trimethylamine-specific corrinoid protein] + dimethylamine. Its pathway is one-carbon metabolism; methanogenesis from trimethylamine. In terms of biological role, catalyzes the transfer of a methyl group from trimethylamine to the corrinoid cofactor of MttC. In Methanosarcina mazei (strain ATCC BAA-159 / DSM 3647 / Goe1 / Go1 / JCM 11833 / OCM 88) (Methanosarcina frisia), this protein is Trimethylamine methyltransferase MttB2 (mttB2).